Consider the following 1577-residue polypeptide: High molecular weight form of myosin-1 (1577 aa).

Residues 75–751 enclose the Myosin motor domain; that stretch reads KSVDDLVQMD…EQRGLELQRN (677 aa). Lysine 119 bears the N6,N6,N6-trimethyllysine mark. 168-175 is an ATP binding site; the sequence is GESGAGKT. Actin-binding regions lie at residues 628–650 and 730–744; these read LDSL…KPNS and QVGK…PEQR. The 28-residue stretch at 755 to 782 folds into the IQ domain; that stretch reads ERVTIQIQAGVRRMFARRLYKRMRAIKP. The MyTH4 domain occupies 1261 to 1401; the sequence is WTKSPIPTSL…PNVEQILAAK (141 aa). Disordered stretches follow at residues 1442-1466 and 1483-1516; these read SRPA…QQAA and QQQQ…LPAE. Composition is skewed to low complexity over residues 1444 to 1466 and 1483 to 1497; these read PAQA…QQAA and QQQQ…QQQA. In terms of domain architecture, SH3 spans 1519–1577; sequence EEYKQVEVVYDYDGGGDAQRLVLVKGAIITVIKEYEGWAYGSTDDGQVGLYPINYTRPI.

This sequence belongs to the TRAFAC class myosin-kinesin ATPase superfamily. Myosin family. Myosin I heavy chain is single-headed.

This is High molecular weight form of myosin-1 from Acanthamoeba castellanii (Amoeba).